The sequence spans 757 residues: POU domain, class 2, transcription factor 1 (757 aa).

Disordered stretches follow at residues 1 to 43, 271 to 295, 375 to 398, and 532 to 574; these read MKLH…QTNG, AATP…SLEE, SLSN…RRKK, and VSSV…TSPL. 2 stretches are compositionally biased toward polar residues: residues 19-43 and 275-285; these read RMNN…QTNG and VQQLPQSQTTP. In terms of domain architecture, POU-specific spans 294 to 368; the sequence is EEPSDLEELE…LLEKWLNDAE (75 aa). Residues 395–454 constitute a DNA-binding region (homeobox); sequence RRKKRTSIETNIRVALEKSFLENQKPTSEEITMIADQLNMEKEVIRVWFCNRRQKEKRIN.

This sequence belongs to the POU transcription factor family. Class-2 subfamily.

The protein resides in the cytoplasm. Its subcellular location is the nucleus. Its function is as follows. Transcription factor that binds to the octamer motif (5'-ATTTGCAT-3') and activates the promoters of the genes for some small nuclear RNAs (snRNA) and histone H2B. Acts downstream of Notch signaling during radial glia formation. Regulates apoptosis, possibly via an FGF-signaling pathway. This is POU domain, class 2, transcription factor 1 from Xenopus tropicalis (Western clawed frog).